A 489-amino-acid polypeptide reads, in one-letter code: Arginine biosynthesis bifunctional protein ArgJ 2, mitochondrial (489 aa).

The transit peptide at Met-1–His-11 directs the protein to the mitochondrion. Substrate contacts are provided by Thr-205, Lys-234, Thr-245, Glu-341, and Asn-484. Thr-245 functions as the Nucleophile in the catalytic mechanism.

Belongs to the ArgJ family. As to quaternary structure, heterodimer of an alpha and a beta chain. In terms of processing, the alpha and beta chains are autoproteolytically processed from a single precursor protein within the mitochondrion.

The protein localises to the mitochondrion matrix. The catalysed reaction is N(2)-acetyl-L-ornithine + L-glutamate = N-acetyl-L-glutamate + L-ornithine. It carries out the reaction L-glutamate + acetyl-CoA = N-acetyl-L-glutamate + CoA + H(+). It functions in the pathway amino-acid biosynthesis; L-arginine biosynthesis; L-ornithine and N-acetyl-L-glutamate from L-glutamate and N(2)-acetyl-L-ornithine (cyclic): step 1/1. Its pathway is amino-acid biosynthesis; L-arginine biosynthesis; N(2)-acetyl-L-ornithine from L-glutamate: step 1/4. Its function is as follows. Catalyzes two activities which are involved in the cyclic version of arginine biosynthesis: the synthesis of acetylglutamate from glutamate and acetyl-CoA, and of ornithine by transacetylation between acetylornithine and glutamate. In Sclerotinia sclerotiorum (strain ATCC 18683 / 1980 / Ss-1) (White mold), this protein is Arginine biosynthesis bifunctional protein ArgJ 2, mitochondrial.